A 212-amino-acid polypeptide reads, in one-letter code: Protein-L-isoaspartate O-methyltransferase (212 aa).

The active site involves S60.

Belongs to the methyltransferase superfamily. L-isoaspartyl/D-aspartyl protein methyltransferase family.

Its subcellular location is the cytoplasm. It catalyses the reaction [protein]-L-isoaspartate + S-adenosyl-L-methionine = [protein]-L-isoaspartate alpha-methyl ester + S-adenosyl-L-homocysteine. In terms of biological role, catalyzes the methyl esterification of L-isoaspartyl residues in peptides and proteins that result from spontaneous decomposition of normal L-aspartyl and L-asparaginyl residues. It plays a role in the repair and/or degradation of damaged proteins. This is Protein-L-isoaspartate O-methyltransferase from Methanococcus maripaludis (strain DSM 14266 / JCM 13030 / NBRC 101832 / S2 / LL).